Here is a 217-residue protein sequence, read N- to C-terminus: Large ribosomal subunit protein uL3 (217 aa).

The disordered stretch occupies residues 129 to 161 (SRGPMSHGSKNHRAPGSTGAGTTPGRIYPGKRM). The segment covering 142-153 (APGSTGAGTTPG) has biased composition (low complexity).

The protein belongs to the universal ribosomal protein uL3 family. As to quaternary structure, part of the 50S ribosomal subunit. Forms a cluster with proteins L14 and L19.

Functionally, one of the primary rRNA binding proteins, it binds directly near the 3'-end of the 23S rRNA, where it nucleates assembly of the 50S subunit. This Prochlorococcus marinus subsp. pastoris (strain CCMP1986 / NIES-2087 / MED4) protein is Large ribosomal subunit protein uL3.